Here is a 107-residue protein sequence, read N- to C-terminus: UPF0060 membrane protein Atu1058 (107 aa).

Transmembrane regions (helical) follow at residues 5–25, 32–52, 59–79, and 85–105; these read LIYV…WAWL, WILL…TLVA, AYAA…WGVE, and RWDI…LFGP.

It belongs to the UPF0060 family.

The protein localises to the cell inner membrane. The polypeptide is UPF0060 membrane protein Atu1058 (Agrobacterium fabrum (strain C58 / ATCC 33970) (Agrobacterium tumefaciens (strain C58))).